The primary structure comprises 215 residues: Ribosomal RNA small subunit methyltransferase G (215 aa).

Residues glycine 77, phenylalanine 82, 130–131, and arginine 146 contribute to the S-adenosyl-L-methionine site; that span reads IE.

This sequence belongs to the methyltransferase superfamily. RNA methyltransferase RsmG family.

The protein resides in the cytoplasm. It catalyses the reaction guanosine(527) in 16S rRNA + S-adenosyl-L-methionine = N(7)-methylguanosine(527) in 16S rRNA + S-adenosyl-L-homocysteine. Its function is as follows. Specifically methylates the N7 position of guanine in position 527 of 16S rRNA. This Bartonella henselae (strain ATCC 49882 / DSM 28221 / CCUG 30454 / Houston 1) (Rochalimaea henselae) protein is Ribosomal RNA small subunit methyltransferase G.